The chain runs to 118 residues: DNA-directed RNA polymerase subunit omega (118 aa).

Positions 78–104 are disordered; it reads DEPEEDSMAMLMGGGQPDKPAEDDMSE.

This sequence belongs to the RNA polymerase subunit omega family. The RNAP catalytic core consists of 2 alpha, 1 beta, 1 beta' and 1 omega subunit. When a sigma factor is associated with the core the holoenzyme is formed, which can initiate transcription.

It catalyses the reaction RNA(n) + a ribonucleoside 5'-triphosphate = RNA(n+1) + diphosphate. Promotes RNA polymerase assembly. Latches the N- and C-terminal regions of the beta' subunit thereby facilitating its interaction with the beta and alpha subunits. The chain is DNA-directed RNA polymerase subunit omega from Dinoroseobacter shibae (strain DSM 16493 / NCIMB 14021 / DFL 12).